The following is a 217-amino-acid chain: Peptide methionine sulfoxide reductase MsrA 1 (217 aa).

Cys-57 is a catalytic residue.

This sequence belongs to the MsrA Met sulfoxide reductase family.

It catalyses the reaction L-methionyl-[protein] + [thioredoxin]-disulfide + H2O = L-methionyl-(S)-S-oxide-[protein] + [thioredoxin]-dithiol. It carries out the reaction [thioredoxin]-disulfide + L-methionine + H2O = L-methionine (S)-S-oxide + [thioredoxin]-dithiol. Its function is as follows. Has an important function as a repair enzyme for proteins that have been inactivated by oxidation. Catalyzes the reversible oxidation-reduction of methionine sulfoxide in proteins to methionine. The protein is Peptide methionine sulfoxide reductase MsrA 1 (msrA1) of Rhizobium meliloti (strain 1021) (Ensifer meliloti).